A 410-amino-acid polypeptide reads, in one-letter code: Serine hydroxymethyltransferase (410 aa).

(6S)-5,6,7,8-tetrahydrofolate contacts are provided by residues L119 and 123–125 (GHL). K228 bears the N6-(pyridoxal phosphate)lysine mark. 351 to 353 (SPF) contacts (6S)-5,6,7,8-tetrahydrofolate.

Belongs to the SHMT family. Homodimer. The cofactor is pyridoxal 5'-phosphate.

Its subcellular location is the cytoplasm. The catalysed reaction is (6R)-5,10-methylene-5,6,7,8-tetrahydrofolate + glycine + H2O = (6S)-5,6,7,8-tetrahydrofolate + L-serine. It participates in one-carbon metabolism; tetrahydrofolate interconversion. The protein operates within amino-acid biosynthesis; glycine biosynthesis; glycine from L-serine: step 1/1. Catalyzes the reversible interconversion of serine and glycine with tetrahydrofolate (THF) serving as the one-carbon carrier. This reaction serves as the major source of one-carbon groups required for the biosynthesis of purines, thymidylate, methionine, and other important biomolecules. Also exhibits THF-independent aldolase activity toward beta-hydroxyamino acids, producing glycine and aldehydes, via a retro-aldol mechanism. The polypeptide is Serine hydroxymethyltransferase (Alkaliphilus oremlandii (strain OhILAs) (Clostridium oremlandii (strain OhILAs))).